Reading from the N-terminus, the 121-residue chain is Ribosome-binding factor A (121 aa).

Belongs to the RbfA family. Monomer. Binds 30S ribosomal subunits, but not 50S ribosomal subunits or 70S ribosomes.

It is found in the cytoplasm. Its function is as follows. One of several proteins that assist in the late maturation steps of the functional core of the 30S ribosomal subunit. Associates with free 30S ribosomal subunits (but not with 30S subunits that are part of 70S ribosomes or polysomes). Required for efficient processing of 16S rRNA. May interact with the 5'-terminal helix region of 16S rRNA. This is Ribosome-binding factor A from Lactobacillus helveticus (strain DPC 4571).